Here is a 557-residue protein sequence, read N- to C-terminus: Putative glutathione-regulated potassium-efflux system protein KefB (557 aa).

A run of 10 helical transmembrane segments spans residues 2–22 (LGYL…ISDV), 24–44 (EILH…GLEL), 56–76 (IFGV…GLLM), 84–104 (AAVV…LQLM), 121–141 (VLLF…LLAG), 146–166 (HFDW…LIGG), 176–196 (FIAA…LVLG), 199–219 (LFMD…GVLL), 237–257 (GLLL…GVLY), and 260–280 (LLWV…VLYL). The region spanning 356 to 475 (KPQVIVVGFG…AGVTQFSRET (120 aa)) is the RCK N-terminal domain.

The protein belongs to the monovalent cation:proton antiporter 2 (CPA2) transporter (TC 2.A.37) family. KefB subfamily. In terms of assembly, interacts with the regulatory subunit KefG.

It localises to the cell inner membrane. Functionally, pore-forming subunit of a potassium efflux system that confers protection against electrophiles. Catalyzes K(+)/H(+) antiport. The chain is Putative glutathione-regulated potassium-efflux system protein KefB from Shigella flexneri.